Reading from the N-terminus, the 420-residue chain is Mannose-1-phosphate guanylyltransferase regulatory subunit alpha (420 aa).

The interval 2-251 (LKAVILIGGP…DGIWSQIKSA (250 aa)) is substrate-binding domain. 2 residues coordinate GDP-alpha-D-mannose: Glu-85 and Gln-247. Positions 273-420 (LAKHTPGGPR…SRSFTNQIIL (148 aa)) are hexapeptide repeat domain. Residues 356-384 (TPNDPNPNDPRAHMDSESLFKDGKLLPAI) form a C-loop region.

This sequence belongs to the transferase hexapeptide repeat family. In terms of assembly, component of the GMPPA-GMPPB mannose-1-phosphate guanylyltransferase complex composed of 4 GMPPA subunits and 8 GMPPB subunits; the complex is organized into three layers, a central layer made up of 2 GMPPA dimers sandwiched between two layers each made up of 2 GMPPB dimers. Expressed in the liver (at protein level).

It is found in the cytoplasm. In terms of biological role, regulatory subunit of the GMPPA-GMPPB mannose-1-phosphate guanylyltransferase complex; reduces the catalytic activity of GMPPB when part of the complex. Mediates allosteric feedback inhibition of GMPPB catalytic activity upon binding GDP-alpha-D-mannose. Together with GMPPB regulates GDP-alpha-D-mannose levels. The sequence is that of Mannose-1-phosphate guanylyltransferase regulatory subunit alpha (GMPPA) from Sus scrofa (Pig).